The primary structure comprises 692 residues: Elongation factor G (692 aa).

In terms of domain architecture, tr-type G spans 8–283 (NRIRNIGIAA…AVIDYLPAPT (276 aa)). GTP is bound by residues 17 to 24 (AHIDAGKT), 81 to 85 (DTPGH), and 135 to 138 (NKMD).

This sequence belongs to the TRAFAC class translation factor GTPase superfamily. Classic translation factor GTPase family. EF-G/EF-2 subfamily.

It is found in the cytoplasm. Its function is as follows. Catalyzes the GTP-dependent ribosomal translocation step during translation elongation. During this step, the ribosome changes from the pre-translocational (PRE) to the post-translocational (POST) state as the newly formed A-site-bound peptidyl-tRNA and P-site-bound deacylated tRNA move to the P and E sites, respectively. Catalyzes the coordinated movement of the two tRNA molecules, the mRNA and conformational changes in the ribosome. The polypeptide is Elongation factor G (Helicobacter pylori (strain Shi470)).